The following is a 385-amino-acid chain: Elongation factor Ts, mitochondrial (385 aa).

A mitochondrion-targeting transit peptide spans Met-1–Phe-50.

The protein belongs to the EF-Ts family.

Its subcellular location is the mitochondrion. In terms of biological role, associates with the EF-Tu.GDP complex and induces the exchange of GDP to GTP. It remains bound to the aminoacyl-tRNA.EF-Tu.GTP complex up to the GTP hydrolysis stage on the ribosome. The polypeptide is Elongation factor Ts, mitochondrial (Oryza sativa subsp. indica (Rice)).